We begin with the raw amino-acid sequence, 744 residues long: MEGPEIQFAEATIDNGRFGTRTVRFETGRLAKQAAGAVLATLDEDTVVLSTTAAGKHPKEQFDFFPLTVDVEERQYAAGKIPGSFFRREGRPSTEAILACRLIDRPLRPLFVKGLRNEVQVVETILAIHPDDSYDVLAINAASASTQISGLPFSGPVGGVRVALIDGTWVGFPRYSEKERAVFDMVVAGRVVGDDVAITMVEAEATDNAWELIKGEGAGAPTEEVVAEGLEAAKPFIRALCEAQAALASRAAKEVQVFPVFPEYEPDAYDAVEQQVADHLDAALRIADKQERESRLDEIKDAAVGALQAGFDGREKELSAAYRALTKKFIRRHILTDSFRIDGRGLKDIRPLTAEVEVLPRVHGSALFERGETQILGVTTLNMLKMEQQLDTLSPVSRKRYMHNYNFPPYSTGETGRVGSPKRREIGHGALAERALVPVLPARDEFPYAIRQVSEALSSNGSTSMGSVCASTLSMLNAGVPLRAPVAGIAMGLVSDEVDGETRYATLTDILGAEDAFGDMDFKVAGTREFVTAIQLDTKLDGIPASVLAGALSQAREARLHILDVMAEAIDTPDEMAATAPRVITVQVPVDKIGEVIGPKGKMINQIQDDTGADISIEDDGTVFIGATDGPSAEAARQAINAIANPHMPEVGERFVGTVVKTTSFGAFVSLTPGKDGLLHISQIRRLVGGKRVENVEDVLGVGQKVQVEIAEIDPRGKLSLHAVVEETPADDAPAEASTATADA.

2 residues coordinate Mg(2+): Asp515 and Asp521. The region spanning 581–640 (PRVITVQVPVDKIGEVIGPKGKMINQIQDDTGADISIEDDGTVFIGATDGPSAEAARQAI) is the KH domain. One can recognise an S1 motif domain in the interval 652–724 (GERFVGTVVK…PRGKLSLHAV (73 aa)).

The protein belongs to the polyribonucleotide nucleotidyltransferase family. It depends on Mg(2+) as a cofactor.

The protein resides in the cytoplasm. The catalysed reaction is RNA(n+1) + phosphate = RNA(n) + a ribonucleoside 5'-diphosphate. Functionally, involved in mRNA degradation. Catalyzes the phosphorolysis of single-stranded polyribonucleotides processively in the 3'- to 5'-direction. The chain is Polyribonucleotide nucleotidyltransferase from Beutenbergia cavernae (strain ATCC BAA-8 / DSM 12333 / CCUG 43141 / JCM 11478 / NBRC 16432 / NCIMB 13614 / HKI 0122).